The sequence spans 499 residues: Potassium channel subfamily K member 5 (499 aa).

Residues 1–7 (MVDRGPL) lie on the Cytoplasmic side of the membrane. Residues 8–26 (LTSAIIFYLAIGAAIFEVL) traverse the membrane as a helical segment. N-linked (GlcNAc...) asparagine glycosylation is present at Asn-77. The pore-forming intramembrane region spans 85 to 112 (WPNAMIFAATVITTIGYGNVAPKTPAGR). K(+) is bound by residues Thr-98, Ile-99, Gly-100, and Tyr-101. A selectivity filter 1 region spans residues 98 to 103 (TIGYGN). Residues 113 to 133 (LFCVFYGLFGVPLCLTWISAL) form a helical membrane-spanning segment. Residues 134–157 (GKFFGGRAKRLGQFLTKRGVSLRK) lie on the Cytoplasmic side of the membrane. Residues 158-180 (AQITCTVIFIVWGVLVHLVIPPF) traverse the membrane as a helical segment. The segment at residues 190–215 (YIEGLYYSFITISTIGFGDFVAGVNP) is an intramembrane region (pore-forming). K(+)-binding residues include Thr-203, Ile-204, Gly-205, and Phe-206. The interval 203–208 (TIGFGD) is selectivity filter 2. Residues 230 to 250 (WIYLGLAWLSLFVNWKVSMFV) form a helical membrane-spanning segment. Over 251 to 325 (EVHKAIKKRR…SGGGETGPGP (75 aa)) the chain is Cytoplasmic. Disordered regions lie at residues 312 to 335 (AMKT…GGLP), 360 to 388 (QTLR…SPAP), and 428 to 499 (GLSD…PKGT). Over residues 316-334 (SGGGETGPGPGLGPQGGGL) the composition is skewed to gly residues. Over residues 370–382 (RSPDEEAVARAPE) the composition is skewed to basic and acidic residues. Ser-371 bears the Phosphoserine mark. Residues 466-480 (SSSESTFTSTESELS) show a composition bias toward low complexity.

Belongs to the two pore domain potassium channel (TC 1.A.1.8) family. Homodimer; disulfide-linked. Heterodimer with KCNK16 and KCNK17. Abundant expression in kidney, also detected in liver, placenta and small intestine. In the kidney, expression is restricted to the distal tubules and collecting ducts. Not expressed in proximal tubules or glomeruli. Expressed in pancreas, in both endocrine (alpha, beta, gamma, delta, and epsilon) and exocrine (acinar and ductal) cells.

The protein resides in the membrane. The catalysed reaction is K(+)(in) = K(+)(out). The channel conductance is stimulated by extracellular alkaline pH. Inhibited by quinine, quinidine and external acidification. In terms of biological role, k(+) channel that conducts voltage-dependent outward rectifying currents upon membrane depolarization. Voltage sensing is coupled to K(+) electrochemical gradient in an 'ion flux gating' mode where outward but not inward ion flow opens the gate. Homo- and heterodimerizes to form functional channels with distinct regulatory and gating properties. This is Potassium channel subfamily K member 5 from Homo sapiens (Human).